The chain runs to 422 residues: Phosphoribosylamine--glycine ligase (422 aa).

Residues 107–312 (KDVMAAAGVR…LGQLLHAAAT (206 aa)) enclose the ATP-grasp domain. 137–193 (GPPAGDPAWVVKDDRLAAGKGVVVTADRDVARAHGAALLEAGHPVLLESYLDGPEVS) lines the ATP pocket. Residues Glu282 and Asn284 each coordinate Mg(2+).

This sequence belongs to the GARS family. Mg(2+) serves as cofactor. The cofactor is Mn(2+).

It carries out the reaction 5-phospho-beta-D-ribosylamine + glycine + ATP = N(1)-(5-phospho-beta-D-ribosyl)glycinamide + ADP + phosphate + H(+). It participates in purine metabolism; IMP biosynthesis via de novo pathway; N(1)-(5-phospho-D-ribosyl)glycinamide from 5-phospho-alpha-D-ribose 1-diphosphate: step 2/2. The polypeptide is Phosphoribosylamine--glycine ligase (Mycobacterium bovis (strain ATCC BAA-935 / AF2122/97)).